The primary structure comprises 823 residues: Zygotic DNA replication licensing factor mcm6 (823 aa).

The segment at 159 to 186 (CLDCQTLVRDVEQQFKYTQPSICRNPVC) adopts a C4-type zinc-finger fold. One can recognise an MCM domain in the interval 347-554 (LYHNLCTSLF…TDYAIARRIV (208 aa)). Position 397 to 404 (397 to 404 (GDPSTAKS)) interacts with ATP. Residues 529–532 (SRFD) carry the Arginine finger motif. Residues 666–713 (NLDQEDEHEAEEEPQEVINGDASVPSGVNGHVNGMNGHAEEPNAATPK) form a disordered region. Acidic residues predominate over residues 667–680 (LDQEDEHEAEEEPQ). Low complexity predominate over residues 692-702 (GVNGHVNGMNG).

It belongs to the MCM family. As to quaternary structure, component of the mcm2-7 complex (RLF-M). The complex forms a toroidal hexameric ring with the proposed subunit order mcm2-mcm6-mcm4-mcm7-mcm3-mcm5. Begins to associate with zmcm3, mcm4 and mcm7 into mcm complexes at the neurula stage.

It localises to the nucleus. It carries out the reaction ATP + H2O = ADP + phosphate + H(+). Acts as a component of the mcm2-7 complex (mcm complex) which is the putative replicative helicase essential for 'once per cell cycle' DNA replication initiation and elongation in eukaryotic cells. The active ATPase sites in the mcm2-7 ring are formed through the interaction surfaces of two neighboring subunits such that a critical structure of a conserved arginine finger motif is provided in trans relative to the ATP-binding site of the Walker A box of the adjacent subunit. The six ATPase active sites, however, are likely to contribute differentially to the complex helicase activity. The existence of maternal and zygotic forms of mcm3 and mcm6 suggests that specific forms of mcm2-7 complexes may be used during different stages of development. May replace mmcm6 in the mcm2-7 complex. In Xenopus tropicalis (Western clawed frog), this protein is Zygotic DNA replication licensing factor mcm6.